Here is a 618-residue protein sequence, read N- to C-terminus: MTKKLPSELKQTRKSIQTACEFCHTKHIQCDVGRPCQNCLKRNIGKFCRDKKRKSRKRIEKHGTQPYLNLGKRLVIHDVPSKTVSPSSVHLQRDFLSSDQEKPGKTPAHNTNIQYTYNINDNFQSAGSIPRITNFNTNNGQTVLENTSNNISASQAVHLMNDPIIPTVRKSTLNLKSHFLEQHKAMQQPLATNCLVATSNVPVHSGMDDSNKSDDDVDDETNIHFDSMWCNDEYMKLKDIVDISTPFLPNNSQIFSLQESEYPNPSASTRGNSSLHLTNLLNSTKSVNDQKDSSIGHSTSTFNTYDEVVSRPFISLDMLHLNRGANANTQPSHNAKLESECDSSSHSDADLEKHDTDFISPSKFRELVKTPQDLYDNKCLIKLHNYKLAYTKLLTTLRKKFLEGAEIDKSASVKDEHSTQKHNLRYDLEVIIRSILERYAPIFISLTSNMIEEDLLLQEVTLQRALLDLENMAKLVSCTPMCIWRRSGEICFVSNEFYSLTGFNKNLLLDRTSFIFEYLDHKSVSNYFQIFNELLAFGYNDINKRKKLLMLNACSSTSSKITEGFSFTTDGKAIFTKCNLLLSNGLYLKCACCWTVKRDSFNIPILVMGQFLPIFEMD.

A DNA-binding region (zn(2)-C6 fungal-type) is located at residues 20-48 (CEFCHTKHIQCDVGRPCQNCLKRNIGKFC). Positions 325-353 (ANANTQPSHNAKLESECDSSSHSDADLEK) are disordered. Over residues 335 to 353 (AKLESECDSSSHSDADLEK) the composition is skewed to basic and acidic residues. A PAS domain is found at 466 to 538 (LLDLENMAKL…QIFNELLAFG (73 aa)).

The protein belongs to the ERT1/acuK family.

It is found in the nucleus. Functionally, transcription factor which regulates nonfermentable carbon utilization. Binds specifically to 5'-CGGN(8)CGG-3' and 5'-CGGN(9)CGG-3' sequences in the promoter region. This chain is Glucose starvation modulator protein 1 (GSM1), found in Saccharomyces cerevisiae (strain JAY291) (Baker's yeast).